A 1173-amino-acid chain; its full sequence is Calcium-transporting ATPase 2 (1173 aa).

The interval 1 to 24 (MSRQDENSALLANNENNKPSYTGN) is disordered. The Cytoplasmic segment spans residues 1–114 (MSRQDENSAL…LQLVWAAFND (114 aa)). The span at 7–17 (NSALLANNENN) shows a compositional bias: low complexity. The helical transmembrane segment at 115–139 (KTMQLLTVAAVVSFVLGLYELWMQP) threads the bilayer. Topologically, residues 140–152 (PQYDPEGNKIKQV) are vacuolar. A helical membrane pass occupies residues 153 to 173 (DWIEGVAIMIAVFVVVLVSAA). Residues 174–349 (NDYQKELQFA…LADNISVYGC (176 aa)) lie on the Cytoplasmic side of the membrane. A helical membrane pass occupies residues 350-368 (VSAIILFLVLFTRYLFYII). At 369-388 (PEDGRFHDLDPAQKGSKFMN) the chain is on the vacuolar side. Residues 389 to 409 (IFITSITVIVVAVPEGLPLAV) traverse the membrane as a helical segment. Residues V398 and E403 each coordinate Ca(2+). Over 410–899 (TLALAFATTR…RCVSVSIKKF (490 aa)) the chain is Cytoplasmic. The 4-aspartylphosphate intermediate role is filled by D445. Mg(2+)-binding residues include D445 and T447. ATP contacts are provided by residues T447, K643, 762-764 (TGD), R816, and K822. D841 provides a ligand contact to Mg(2+). Residue N844 participates in ATP binding. A helical membrane pass occupies residues 900 to 922 (IQFQLIVNITAVILTFVSSVASS). N907 serves as a coordination point for Ca(2+). Residues 923–929 (DETSVLT) are Vacuolar-facing. A helical membrane pass occupies residues 930-950 (AVQLLWINLIMDTLAALALAT). Ca(2+)-binding residues include N937 and D941. Residues 951–976 (DKPDPNIMDRKPRGRSTSLISVSTWK) are Cytoplasmic-facing. Residues 977–998 (MILSQATLQLIVTFILHFYGPE) form a helical membrane-spanning segment. Residues 999-1010 (LFFKKHEDEITS) lie on the Vacuolar side of the membrane. A helical membrane pass occupies residues 1011–1029 (HQQQQLNAMTFNTFVWLQF). Topologically, residues 1030–1065 (FTMLVSRKLDEGDGISNWRGRISAANLNFFQDLGRN) are cytoplasmic. A helical membrane pass occupies residues 1066-1086 (YYFLTIMAIIGSCQVLIMFFG). Topologically, residues 1087 to 1099 (GAPFSIARQTKSM) are vacuolar. Residues 1100-1120 (WITAVLCGMLSLIMGVLVRIC) traverse the membrane as a helical segment. Topologically, residues 1121 to 1173 (PDEVAVKVFPAAFVQRFKYVFGLEFLRKNHTGKHDDEEALLEESDSPESTAFY) are cytoplasmic.

Belongs to the cation transport ATPase (P-type) (TC 3.A.3) family.

It is found in the vacuole membrane. The enzyme catalyses Ca(2+)(in) + ATP + H2O = Ca(2+)(out) + ADP + phosphate + H(+). In terms of biological role, this magnesium-dependent enzyme catalyzes the hydrolysis of ATP coupled with the transport of calcium. Transports the calcium to the vacuole and participates in the control of the cytosolic free calcium. In Saccharomyces cerevisiae (strain ATCC 204508 / S288c) (Baker's yeast), this protein is Calcium-transporting ATPase 2 (PMC1).